The sequence spans 78 residues: Calcium/calmodulin-dependent protein kinase II inhibitor 1 (78 aa).

Residues 41-68 (NKRPPKLGQIGRSKRVVIEDDRIDDVLK) are CAMK2 inhibitory domain.

The protein belongs to the CAMK2N family. Interacts with CAMK2B; the presence of Ca(2+)/calmodulin increases the interaction but is not essential. Interacts with CAMK2A; this interaction requires CAMK2A activation by Ca(2+).

The protein localises to the synapse. The protein resides in the cell projection. It is found in the dendrite. Its subcellular location is the postsynaptic density. Potent and specific inhibitor of CaM-kinase II (CAMK2). Plays a role in the maintenance of long-term retrieval-induced memory in response to contextual fear. Modulates blood pressure and vascular reactivity via regulation of CAMK2 activity in addition to regulation of left ventricular mass. Mediates the NLRP3 inflammasome in cardiomyocytes via acting as an inhibitor of the MAPK14/p38 and MAPK8/JNK pathways, thereby regulating ventricular remodeling and cardiac rhythm post-myocardial infarction. Negatively effects insulin sensitivity and promotes lipid formation in adipose tissues independent of CAMK2 signaling. The chain is Calcium/calmodulin-dependent protein kinase II inhibitor 1 (CAMK2N1) from Homo sapiens (Human).